The chain runs to 301 residues: Probable alpha-L-glutamate ligase (301 aa).

Positions 104–287 (LQLLSRRGIG…VAGMIIEHLE (184 aa)) constitute an ATP-grasp domain. ATP is bound by residues K141, 178–179 (EY), D187, and 211–213 (RSN). D248, E260, and N262 together coordinate Mg(2+). Positions 248, 260, and 262 each coordinate Mn(2+).

This sequence belongs to the RimK family. Mg(2+) is required as a cofactor. The cofactor is Mn(2+).

This is Probable alpha-L-glutamate ligase from Pseudomonas putida (strain ATCC 700007 / DSM 6899 / JCM 31910 / BCRC 17059 / LMG 24140 / F1).